The sequence spans 303 residues: Target of rapamycin complex subunit LST8 (303 aa).

WD repeat units lie at residues 1 to 27 (MSVI…CSRT), 30 to 68 (HSDS…PNPV), 73 to 112 (GHRG…IPRN), 114 to 153 (KHNA…CTHQ), 157 to 196 (EDDT…DASH), 205 to 244 (AHST…KLET), and 248 to 287 (GHQR…IVRQ).

It belongs to the WD repeat LST8 family. As to quaternary structure, the target of rapamycin complex 1 (TORC1) is composed of at least KOG1, LST8, TCO89 and either TOR1 (TORC1-A) or TOR2 (TORC1-B). TORC1 binds to and is inhibited by FKBP-rapamycin. Interacts with PIB2; following activation of PIB2 by glutamine or cysteine and as part of the TORC1 complex. The target of rapamycin complex 2 (TORC2) is composed of at least AVO1, AVO2, BIT61, LST8, TOR2 and TSC11. TORC2 forms a homodimer. Contrary to TORC1, TORC2 does not bind to and is not sensitive to FKBP-rapamycin. LST8 binds to the C-terminal kinase domain in TOR2.

The protein resides in the cell membrane. It localises to the vacuole membrane. In terms of biological role, essential component of both TORC1 and TORC2. TORC1 regulates multiple cellular processes to control cell growth in response to environmental signals. Nutrient limitation and environmental stress signals cause inactivation of TORC1. Active TORC1 positively controls ribosome biogenesis via control of rRNA, ribosomal protein and tRNA gene expression, and rRNA processing. TORC1 positively controls protein biosynthesis by regulation of mRNA stability, translation initiation factor activity, and high-affinity amino acid permeases that serve to provide amino acids for use by the translation machinery. TORC1 also promotes growth by sequestering a number of nutrient and general stress-responsive transcription factors in the cytoplasm. TORC1 negatively controls macroautophagy, a process to recycle surplus cytoplasmic mass under nutrient starvation conditions. LST8 is involved in the negative regulation of transcription factors GLN3 and RTG1-RTG3, limiting the synthesis of alpha-ketoglutarate, glutamate and glutamine. LST8 is required for targeting of amino acid permeases (AAPs) to the plasma membrane. TORC2 regulates cell cycle-dependent polarization of the actin-cytoskeleton, cell wall integrity, and receptor endocytosis. TORC2 controls polarity of the actin cytoskeleton, which is required for orienting the secretory pathway toward discrete growth sites, via the RHO1/PKC1/MAPK cell integrity pathway. LST8 is involved in maintenance of cell wall integrity. LST8 modulates TOR2 kinase activity. The sequence is that of Target of rapamycin complex subunit LST8 from Saccharomyces cerevisiae (strain ATCC 204508 / S288c) (Baker's yeast).